The chain runs to 81 residues: uncharacterized protein (81 aa).

Residues 46–81 (ASSPVVKRKSLVKRKSPVKRSPLKKRSQMRTSPCEA) form a disordered region. Residues 51–73 (VKRKSLVKRKSPVKRSPLKKRSQ) show a composition bias toward basic residues.

This is an uncharacterized protein from Frog virus 3 (isolate Goorha) (FV-3).